The primary structure comprises 154 residues: Yop proteins translocation protein O (154 aa).

The segment at glutamate 132–alanine 154 is disordered.

Belongs to the SpaM family.

Its function is as follows. Component of the yop secretion machinery. This is Yop proteins translocation protein O (yscO) from Yersinia pseudotuberculosis serotype I (strain IP32953).